Here is a 415-residue protein sequence, read N- to C-terminus: Heterogeneous nuclear ribonucleoprotein F (415 aa).

N-acetylmethionine is present on Met-1. Met-2 bears the N-acetylmethionine; in Heterogeneous nuclear ribonucleoprotein F, N-terminally processed mark. Residues 13–85 form the RRM 1 domain; sequence VKLRGLPWSC…ESMGHRYIEV (73 aa). Residue Lys-72 forms a Glycyl lysine isopeptide (Lys-Gly) (interchain with G-Cter in SUMO) linkage. An interaction with RNA region spans residues 81-86; sequence RYIEVF. Residue Lys-87 forms a Glycyl lysine isopeptide (Lys-Gly) (interchain with G-Cter in SUMO2) linkage. Residues Ser-104, Ser-107, and Ser-161 each carry the phosphoserine modification. The 78-residue stretch at 111-188 folds into the RRM 2 domain; that stretch reads GFVRLRGLPF…RYIEVFKSSQ (78 aa). A Glycyl lysine isopeptide (Lys-Gly) (interchain with G-Cter in SUMO2) cross-link involves residue Lys-167. The interaction with RNA stretch occupies residues 179–184; that stretch reads RYIEVF. Lys-185 participates in a covalent cross-link: Glycyl lysine isopeptide (Lys-Gly) (interchain with G-Cter in SUMO2). A phosphoserine mark is found at Ser-187, Ser-193, and Ser-195. An N6-acetyllysine; alternate modification is found at Lys-200. A Glycyl lysine isopeptide (Lys-Gly) (interchain with G-Cter in SUMO2); alternate cross-link involves residue Lys-200. Position 215 is a phosphothreonine (Thr-215). Lys-224 is subject to N6-acetyllysine; alternate. Lys-224 is covalently cross-linked (Glycyl lysine isopeptide (Lys-Gly) (interchain with G-Cter in SUMO2); alternate). Residue Ser-265 is modified to Phosphoserine. An RRM 3 domain is found at 289-366; the sequence is HCVHMRGLPY…IELFLNSTTG (78 aa). The segment at 355–360 is interaction with RNA; it reads RYIELF.

In terms of assembly, identified in the spliceosome C complex. Interacts with AGO1, AGO2, TBP and TXNL4/DIM1. In terms of processing, sumoylated.

It localises to the nucleus. Its subcellular location is the nucleoplasm. Its function is as follows. Component of the heterogeneous nuclear ribonucleoprotein (hnRNP) complexes which provide the substrate for the processing events that pre-mRNAs undergo before becoming functional, translatable mRNAs in the cytoplasm. Plays a role in the regulation of alternative splicing events. Binds G-rich sequences in pre-mRNAs and keeps target RNA in an unfolded state. The sequence is that of Heterogeneous nuclear ribonucleoprotein F (HNRNPF) from Macaca fascicularis (Crab-eating macaque).